The sequence spans 285 residues: Protease HtpX homolog (285 aa).

A run of 2 helical transmembrane segments spans residues 7-27 (TAML…MIGG) and 30-50 (GMTI…WFSD). Histidine 131 is a binding site for Zn(2+). Glutamate 132 is an active-site residue. Histidine 135 contributes to the Zn(2+) binding site. Helical transmembrane passes span 146-166 (ISAT…FFGG) and 177-197 (IAGI…QMAI). Glutamate 202 serves as a coordination point for Zn(2+).

Belongs to the peptidase M48B family. Requires Zn(2+) as cofactor.

It localises to the cell inner membrane. This Burkholderia thailandensis (strain ATCC 700388 / DSM 13276 / CCUG 48851 / CIP 106301 / E264) protein is Protease HtpX homolog.